The chain runs to 4388 residues: Intermembrane lipid transfer protein VPS13D (4388 aa).

Residues 2-115 (LEGLVAWVLN…ERERKKALLQ (114 aa)) form the Chorein N-terminal domain. The residue at position 663 (Ser663) is a Phosphoserine. The tract at residues 745–796 (QDNSRRKSRDGSASEETQFSDDEYKTPLATPPNTPPPESSSSNGEKTPPFSG) is disordered. Residues 747–756 (NSRRKSRDGS) are compositionally biased toward basic and acidic residues. The segment covering 773–782 (ATPPNTPPPE) has biased composition (pro residues). 5 positions are modified to phosphoserine: Ser1034, Ser1038, Ser1042, Ser1138, and Ser1341. A disordered region spans residues 1563–1582 (ASATSSPCPDSPLPPLSTCG). A phosphoserine mark is found at Ser1598, Ser1603, and Ser1699. Disordered regions lie at residues 1741-1771 (RPTSASRKKQKEVQDKDYPLTPPPSPTVDEP), 2070-2108 (QDKESVPSASPTGIPKHSLRKTTSTEEPRGTHSQGQFTM), and 2122-2145 (FVPSTSTKQQGPQPTLSVGQESSS). Thr1761 carries the post-translational modification Phosphothreonine. At Ser1765 the chain carries Phosphoserine. Residues 2123-2144 (VPSTSTKQQGPQPTLSVGQESS) show a composition bias toward polar residues. A phosphoserine mark is found at Ser2435, Ser2671, Ser2861, Ser2864, and Ser2983. A UBA domain is found at 2633–2676 (TLDPVLELQLARLQELGFSMDDCRKALLACQGQLKKAASWLFKN). One can recognise an SHR-BD domain in the interval 3276-3558 (LKIFISAPYW…LDYAWDEPTL (283 aa)). Lys3524 carries the N6-acetyllysine modification.

It belongs to the VPS13 family. Widely expressed.

In terms of biological role, mediates the transfer of lipids between membranes at organelle contact sites. Functions in promoting mitochondrial clearance by mitochondrial autophagy (mitophagy), also possibly by positively regulating mitochondrial fission. Mitophagy plays an important role in regulating cell health and mitochondrial size and homeostasis. The sequence is that of Intermembrane lipid transfer protein VPS13D from Homo sapiens (Human).